A 193-amino-acid chain; its full sequence is 3-isopropylmalate dehydratase small subunit (193 aa).

This sequence belongs to the LeuD family. LeuD type 1 subfamily. In terms of assembly, heterodimer of LeuC and LeuD.

The catalysed reaction is (2R,3S)-3-isopropylmalate = (2S)-2-isopropylmalate. Its pathway is amino-acid biosynthesis; L-leucine biosynthesis; L-leucine from 3-methyl-2-oxobutanoate: step 2/4. In terms of biological role, catalyzes the isomerization between 2-isopropylmalate and 3-isopropylmalate, via the formation of 2-isopropylmaleate. This Bacillus cereus (strain ATCC 10987 / NRS 248) protein is 3-isopropylmalate dehydratase small subunit.